The following is a 240-amino-acid chain: Putative glycyl-radical enzyme activating enzyme MJ1227 (240 aa).

A Radical SAM core domain is found at 14 to 232 (IDYPKKASAV…KKYIDNVVIR (219 aa)). [4Fe-4S] cluster contacts are provided by Cys-29, Cys-33, and Cys-36. S-adenosyl-L-methionine contacts are provided by residues 35 to 37 (YCH), Gly-71, and 126 to 128 (FDK).

Belongs to the organic radical-activating enzymes family. [4Fe-4S] cluster is required as a cofactor.

The catalysed reaction is glycyl-[protein] + reduced [flavodoxin] + S-adenosyl-L-methionine = glycin-2-yl radical-[protein] + semiquinone [flavodoxin] + 5'-deoxyadenosine + L-methionine + H(+). The polypeptide is Putative glycyl-radical enzyme activating enzyme MJ1227 (Methanocaldococcus jannaschii (strain ATCC 43067 / DSM 2661 / JAL-1 / JCM 10045 / NBRC 100440) (Methanococcus jannaschii)).